A 483-amino-acid polypeptide reads, in one-letter code: Proline--tRNA ligase (483 aa).

Belongs to the class-II aminoacyl-tRNA synthetase family. ProS type 3 subfamily. Homodimer.

The protein resides in the cytoplasm. The enzyme catalyses tRNA(Pro) + L-proline + ATP = L-prolyl-tRNA(Pro) + AMP + diphosphate. Functionally, catalyzes the attachment of proline to tRNA(Pro) in a two-step reaction: proline is first activated by ATP to form Pro-AMP and then transferred to the acceptor end of tRNA(Pro). The chain is Proline--tRNA ligase from Mycoplasma pneumoniae (strain ATCC 29342 / M129 / Subtype 1) (Mycoplasmoides pneumoniae).